The chain runs to 39 residues: Cytochrome b6-f complex subunit 5 (39 aa).

The helical transmembrane segment at 5 to 25 (LLSGIVLGLVPVTILGLFVTA) threads the bilayer.

This sequence belongs to the PetG family. As to quaternary structure, the 4 large subunits of the cytochrome b6-f complex are cytochrome b6, subunit IV (17 kDa polypeptide, PetD), cytochrome f and the Rieske protein, while the 4 small subunits are PetG, PetL, PetM and PetN. The complex functions as a dimer.

It localises to the plastid. Its subcellular location is the chloroplast thylakoid membrane. In terms of biological role, component of the cytochrome b6-f complex, which mediates electron transfer between photosystem II (PSII) and photosystem I (PSI), cyclic electron flow around PSI, and state transitions. PetG is required for either the stability or assembly of the cytochrome b6-f complex. The chain is Cytochrome b6-f complex subunit 5 from Pleurastrum terricola (Filamentous green alga).